Reading from the N-terminus, the 478-residue chain is H(+)/Cl(-) exchange transporter ClcA (478 aa).

The Cytoplasmic segment spans residues 1–32 (MTHSTQQLSPEGVAEGKRGRLIRELVNRDKTP). A helical transmembrane segment spans residues 33–69 (LIILIMAAVVGVVTGLLGVAFDRGVDWVQQQRLLALA). Over 70–76 (NVADYAL) the chain is Periplasmic. Residues 77 to 100 (LVWPLAFIMSALLAMMGYFLVSRF) form a helical membrane-spanning segment. A Selectivity filter part_1 motif is present at residues 106–110 (GSGIP). Ser107 contributes to the chloride binding site. An intramembrane region (helical) is located at residues 109 to 116 (IPEIEGAM). At 117-123 (EEMRPVR) the chain is on the cytoplasmic side. 2 consecutive transmembrane segments (helical) span residues 124–141 (WWRV…TLGA) and 148–166 (EGPM…VDIF). Positions 146–150 (GREGP) match the Selectivity filter part_2 motif. The Cytoplasmic portion of the chain corresponds to 167–176 (RLRSPEARHS). 2 intramembrane regions (helical) span residues 177–189 (LLAT…LSAA) and 193–201 (PLAGILFVI). Topologically, residues 202–214 (EEMRSQFRYSLVS) are cytoplasmic. The helical transmembrane segment at 215–232 (IKAVFIGVITSTIVYRYF) threads the bilayer. At 233–252 (NGERAIIEVGKLSDAPLNTL) the chain is on the periplasmic side. The helical transmembrane segment at 253–281 (WLYLLLGIIFGAVGVIFNALIFRTQDMFV) threads the bilayer. Over 282-287 (RFHGGD) the chain is Cytoplasmic. The helical transmembrane segment at 288–309 (WRKLVLIGGLLGGMCGLLALLH) threads the bilayer. The Periplasmic segment spans residues 310–329 (GNAVGGGFALIPIAAAGNFS). 2 helical membrane-spanning segments follow: residues 330–349 (IGML…LCFG) and 355–376 (GIFA…LSCA). The Selectivity filter part_3 motif lies at 355–359 (GIFAP). 2 residues coordinate chloride: Ile356 and Phe357. At 377–386 (HFFPQYGIEA) the chain is on the periplasmic side. An intramembrane region (helical) is located at residues 387–401 (GTFAIAGMGALFAAS). Positions 402–404 (VRA) form an intramembrane region, note=Loop between two helices. The segment at residues 405 to 416 (PLTGIVLVLEMT) is an intramembrane region (helical). The note=Loop between two helices intramembrane region spans 417–421 (DNYQL). Residues 422 to 438 (ILPMIVTCLGATLIAQF) form a helical membrane-spanning segment. Residues 439–478 (MGGKPLYSAILARTLAKQEQARATVIAQEPAVENTPQIGK) are Cytoplasmic-facing. Tyr445 serves as a coordination point for chloride.

It belongs to the chloride channel (TC 2.A.49) family. ClcA subfamily. As to quaternary structure, homodimer.

The protein localises to the cell inner membrane. The enzyme catalyses 2 chloride(in) + H(+)(out) = 2 chloride(out) + H(+)(in). Functionally, proton-coupled chloride transporter. Functions as antiport system and exchanges two chloride ions for 1 proton. Probably acts as an electrical shunt for an outwardly-directed proton pump that is linked to amino acid decarboxylation, as part of the extreme acid resistance (XAR) response. This Yersinia pestis bv. Antiqua (strain Antiqua) protein is H(+)/Cl(-) exchange transporter ClcA.